The following is a 226-amino-acid chain: 7-cyano-7-deazaguanine synthase (226 aa).

9–19 (LSGGLDSTVAT) contributes to the ATP binding site. Zn(2+)-binding residues include Cys-192, Cys-200, Cys-203, and Cys-206.

It belongs to the QueC family. Zn(2+) is required as a cofactor.

It carries out the reaction 7-carboxy-7-deazaguanine + NH4(+) + ATP = 7-cyano-7-deazaguanine + ADP + phosphate + H2O + H(+). Its pathway is purine metabolism; 7-cyano-7-deazaguanine biosynthesis. Catalyzes the ATP-dependent conversion of 7-carboxy-7-deazaguanine (CDG) to 7-cyano-7-deazaguanine (preQ(0)). The sequence is that of 7-cyano-7-deazaguanine synthase from Methanosphaera stadtmanae (strain ATCC 43021 / DSM 3091 / JCM 11832 / MCB-3).